The following is a 101-amino-acid chain: Small ribosomal subunit protein uS14 (101 aa).

Belongs to the universal ribosomal protein uS14 family. In terms of assembly, part of the 30S ribosomal subunit. Contacts proteins S3 and S10.

Binds 16S rRNA, required for the assembly of 30S particles and may also be responsible for determining the conformation of the 16S rRNA at the A site. The sequence is that of Small ribosomal subunit protein uS14 from Shewanella sp. (strain MR-4).